The sequence spans 470 residues: 3-isopropylmalate dehydratase large subunit (470 aa).

Positions 351, 411, and 414 each coordinate [4Fe-4S] cluster.

It belongs to the aconitase/IPM isomerase family. LeuC type 1 subfamily. As to quaternary structure, heterodimer of LeuC and LeuD. [4Fe-4S] cluster is required as a cofactor.

The catalysed reaction is (2R,3S)-3-isopropylmalate = (2S)-2-isopropylmalate. It functions in the pathway amino-acid biosynthesis; L-leucine biosynthesis; L-leucine from 3-methyl-2-oxobutanoate: step 2/4. Functionally, catalyzes the isomerization between 2-isopropylmalate and 3-isopropylmalate, via the formation of 2-isopropylmaleate. The sequence is that of 3-isopropylmalate dehydratase large subunit from Rhodopseudomonas palustris (strain HaA2).